We begin with the raw amino-acid sequence, 304 residues long: Putative HTH-type transcriptional regulatory protein Memar_2347 (304 aa).

One can recognise an HTH cro/C1-type domain in the interval 132–189 (LREVRERFRMSLGDLASHLGVSRRTISKYESGMGTTLDVAIKLEEIFNAPLVETIELL). A DNA-binding region (H-T-H motif) is located at residues 143 to 162 (LGDLASHLGVSRRTISKYES).

This chain is Putative HTH-type transcriptional regulatory protein Memar_2347, found in Methanoculleus marisnigri (strain ATCC 35101 / DSM 1498 / JR1).